The primary structure comprises 236 residues: Probable fimbrial chaperone EcpE (236 aa).

An N-terminal signal peptide occupies residues 1-27 (MFRRRGVTLTKALLTAVCMLAAPLTQA).

The protein belongs to the EcpB/EcpE family.

Part of the ecpRABCDE operon, which encodes the E.coli common pilus (ECP). ECP is found in both commensal and pathogenic strains and plays a dual role in early-stage biofilm development and host cell recognition. The polypeptide is Probable fimbrial chaperone EcpE (ecpE) (Escherichia coli O157:H7).